Here is a 95-residue protein sequence, read N- to C-terminus: Histone-like DNA-binding protein (95 aa).

Belongs to the bacterial histone-like protein family.

This chain is Histone-like DNA-binding protein, found in Rickettsia rickettsii.